The following is an 821-amino-acid chain: Ribonuclease R (821 aa).

Residues 267 to 593 enclose the RNB domain; sequence RVDLRALPLV…LLHRAIKYLI (327 aa). One can recognise an S1 motif domain in the interval 652 to 733; sequence GEELEGVVAN…DDRQIDFELV (82 aa). The interval 739-821 is disordered; sequence LRGQGKTAKK…KSGKVRDKTK (83 aa). Basic and acidic residues-rich tracts occupy residues 748-764 and 774-794; these read KRADEARAKAQGKKEAA and TKSELKPQVEATRRPDSEGRS. Residues 795–814 show a composition bias toward basic residues; it reads KPKKTKAPKKRKDQARKKSG.

Belongs to the RNR ribonuclease family. RNase R subfamily.

It localises to the cytoplasm. The catalysed reaction is Exonucleolytic cleavage in the 3'- to 5'-direction to yield nucleoside 5'-phosphates.. Functionally, 3'-5' exoribonuclease that releases 5'-nucleoside monophosphates and is involved in maturation of structured RNAs. The chain is Ribonuclease R from Vibrio cholerae serotype O1 (strain ATCC 39315 / El Tor Inaba N16961).